Consider the following 120-residue polypeptide: NAD(P)H-quinone oxidoreductase subunit 3, chloroplastic (120 aa).

The next 3 helical transmembrane spans lie at 9–29, 64–84, and 88–108; these read IFWA…LISA, MFAL…PWAM, and VLGV…IVGL.

It belongs to the complex I subunit 3 family. As to quaternary structure, NDH is composed of at least 16 different subunits, 5 of which are encoded in the nucleus.

It is found in the plastid. It localises to the chloroplast thylakoid membrane. The enzyme catalyses a plastoquinone + NADH + (n+1) H(+)(in) = a plastoquinol + NAD(+) + n H(+)(out). It catalyses the reaction a plastoquinone + NADPH + (n+1) H(+)(in) = a plastoquinol + NADP(+) + n H(+)(out). Functionally, NDH shuttles electrons from NAD(P)H:plastoquinone, via FMN and iron-sulfur (Fe-S) centers, to quinones in the photosynthetic chain and possibly in a chloroplast respiratory chain. The immediate electron acceptor for the enzyme in this species is believed to be plastoquinone. Couples the redox reaction to proton translocation, and thus conserves the redox energy in a proton gradient. The protein is NAD(P)H-quinone oxidoreductase subunit 3, chloroplastic of Citrus sinensis (Sweet orange).